Here is a 436-residue protein sequence, read N- to C-terminus: MLLGVILSIPRLVLFLPGVPVTSTLPSQPKDADLAVSARPSAQGRFGRYGGQYVPETLMPALAELEQAAALAWKDPAFTAELDRLLRSYVGRATPLYEAERLTAHYCRSDGGPRIWLKREDLNHTGAHKINNALGQALLALRMGKKRIIAETGAGQHGVATATVCARFGLECVVYMGAEDMRRQALNVFRMRLLGATVQPVTAGTATLKDATSEAIRDWVTNVETTHYILGSVAGPHPYPMLVRDFHAVIGQEARQQCAEAFGRLPDVLLACVGGGSNAMGLFHPFVQDRSVRMIGVEAAGDGVETGRHAATITEGRVGVLHGAMSLLLQDDEGQVQEAHSISAGLDYPGVGPEHSYLCEIGRAEYAAVSDQQALDALRLVSELEGIIPALETAHAFAWLETLCPTLAAGTEVVINCSGRGDKDVNTVAEKLGNQL.

Lys-129 carries the N6-(pyridoxal phosphate)lysine modification.

The protein belongs to the TrpB family. In terms of assembly, tetramer of two alpha and two beta chains. The cofactor is pyridoxal 5'-phosphate.

It catalyses the reaction (1S,2R)-1-C-(indol-3-yl)glycerol 3-phosphate + L-serine = D-glyceraldehyde 3-phosphate + L-tryptophan + H2O. It functions in the pathway amino-acid biosynthesis; L-tryptophan biosynthesis; L-tryptophan from chorismate: step 5/5. The beta subunit is responsible for the synthesis of L-tryptophan from indole and L-serine. In Prochlorococcus marinus (strain MIT 9313), this protein is Tryptophan synthase beta chain.